A 565-amino-acid chain; its full sequence is Ubiquitin carboxyl-terminal hydrolase 21 (565 aa).

Basic and acidic residues-rich tracts occupy residues 1–14 and 58–70; these read MPQA…RTRE and PPDE…DLGR. The segment at 1 to 128 is disordered; the sequence is MPQASEHRLG…LRPMGIALGG (128 aa). Residues 71-81 are compositionally biased toward low complexity; the sequence is GRTSGSRPRGP. Polar residues predominate over residues 104–116; sequence SRTNLTRSKSVSS. The short motif at 134-152 is the Nuclear export signal element; the sequence is ELGAALSRLALRPEPPTLR. Residues 212 to 558 form the USP domain; it reads VGLRNLGNTC…EGYVLFYQLM (347 aa). Cys221 serves as the catalytic Nucleophile. Positions 324-347 are disordered; that stretch reads APPILASGPVPSPPRRGGALHEEP. 4 residues coordinate Zn(2+): Cys384, Cys387, Cys437, and Cys440. The active-site Proton acceptor is the His518.

The protein belongs to the peptidase C19 family. USP21 subfamily. As to quaternary structure, interacts with BEND3.

It localises to the cytoplasm. It is found in the nucleus. It carries out the reaction Thiol-dependent hydrolysis of ester, thioester, amide, peptide and isopeptide bonds formed by the C-terminal Gly of ubiquitin (a 76-residue protein attached to proteins as an intracellular targeting signal).. Its function is as follows. Deubiquitinates histone H2A, a specific tag for epigenetic transcriptional repression, thereby acting as a coactivator. Deubiquitination of histone H2A releaves the repression of di- and trimethylation of histone H3 at 'Lys-4', resulting in regulation of transcriptional initiation. Regulates gene expression via histone H2A deubiquitination. Deubiquitinates BAZ2A/TIP5 leading to its stabilization. Also capable of removing NEDD8 from NEDD8 conjugates but has no effect on Sentrin-1 conjugates. Also acts as a negative regulator of the ribosome quality control (RQC) by mediating deubiquitination of 40S ribosomal proteins RPS10/eS10 and RPS20/uS10, thereby antagonizing ZNF598-mediated 40S ubiquitination. This chain is Ubiquitin carboxyl-terminal hydrolase 21 (Usp21), found in Rattus norvegicus (Rat).